A 427-amino-acid chain; its full sequence is Large ribosomal subunit protein uL4 (427 aa).

At Ala2 the chain carries N-acetylalanine. Lys14 carries the post-translational modification N6-acetyllysine. Arg97 is subject to Omega-N-methylarginine. At Lys106 the chain carries N6-acetyllysine. A Glycyl lysine isopeptide (Lys-Gly) (interchain with G-Cter in SUMO2) cross-link involves residue Lys239. Lys259 carries the post-translational modification N6-acetyllysine. Position 266 is a phosphothreonine (Thr266). Phosphoserine is present on residues Ser290 and Ser295. Position 300 is a citrulline (Arg300). Residue Lys327 forms a Glycyl lysine isopeptide (Lys-Gly) (interchain with G-Cter in SUMO2) linkage. Lys333 and Lys353 each carry N6-acetyllysine. The residue at position 364 (Lys364) is an N6-acetyllysine; alternate. Lys364 participates in a covalent cross-link: Glycyl lysine isopeptide (Lys-Gly) (interchain with G-Cter in SUMO1); alternate. Residue Ser365 is modified to Phosphoserine. Residues 369–427 (AAVAGKKPVVGKKGKKAAVGVKKQKKPLVGKKAAATKKPAPEKKPAEKKPTTEEKKPAA) form a disordered region. Residues 377-397 (VVGKKGKKAAVGVKKQKKPLV) are compositionally biased toward basic residues. Residues 407 to 427 (PAPEKKPAEKKPTTEEKKPAA) show a composition bias toward basic and acidic residues.

This sequence belongs to the universal ribosomal protein uL4 family. In terms of assembly, component of the large ribosomal subunit. May bind IPO9 with low affinity. Interacts with RBM3. Citrullinated by PADI4.

It is found in the cytoplasm. In terms of biological role, component of the large ribosomal subunit. The ribosome is a large ribonucleoprotein complex responsible for the synthesis of proteins in the cell. In Homo sapiens (Human), this protein is Large ribosomal subunit protein uL4 (RPL4).